The primary structure comprises 312 residues: Putative 1-aminocyclopropane-1-carboxylate deaminase (312 aa).

Position 42 is an N6-(pyridoxal phosphate)lysine (Lys42).

It belongs to the ACC deaminase/D-cysteine desulfhydrase family. It depends on pyridoxal 5'-phosphate as a cofactor.

The enzyme catalyses 1-aminocyclopropane-1-carboxylate + H2O = 2-oxobutanoate + NH4(+). This Thermotoga maritima (strain ATCC 43589 / DSM 3109 / JCM 10099 / NBRC 100826 / MSB8) protein is Putative 1-aminocyclopropane-1-carboxylate deaminase.